A 373-amino-acid polypeptide reads, in one-letter code: Sensor protein DegM (373 aa).

Helical transmembrane passes span 27 to 47, 57 to 77, 91 to 111, and 122 to 142; these read ILLAFLYGGKRAGWGVAAIAV, LFLLGVVLIVLTALFYALCVN, YASLLVILPATIQTFGTLYLI, and VAGWLYIVFLVVTVVLVTYLF. In terms of domain architecture, Histidine kinase spans 170–370; it reads SIAHEVRNPL…KVVLSLPIEK (201 aa). The residue at position 173 (H173) is a Phosphohistidine; by autocatalysis.

It localises to the cell membrane. The enzyme catalyses ATP + protein L-histidine = ADP + protein N-phospho-L-histidine.. Involved in a sensory transduction pathway that enhances the production of minor proteases. This Bacillus sp. (strain B21-2) protein is Sensor protein DegM (degM).